A 382-amino-acid polypeptide reads, in one-letter code: Solvent efflux pump periplasmic linker SrpA (382 aa).

The signal sequence occupies residues 1 to 23 (MRQIRSPRALRVIPLTALMLISG). C24 is lipidated: N-palmitoyl cysteine. The S-diacylglycerol cysteine moiety is linked to residue C24. Positions 98-127 (RTYEAQLRRAEANRTSAQNLARRYETLLKT) form a coiled coil.

It belongs to the membrane fusion protein (MFP) (TC 8.A.1) family.

It is found in the cell inner membrane. The periplasmic linker protein component of an organic solvent efflux pump. Involved in export of a number of low log POW compounds including hexane (log POW 3.5), toluene (log POW 2.5) and dimethylphthalate (log POW 2.3). The solvent resistance phenotype has been postulated to depend on the operon expression level. The polypeptide is Solvent efflux pump periplasmic linker SrpA (srpA) (Pseudomonas putida (Arthrobacter siderocapsulatus)).